The chain runs to 833 residues: Leucine--tRNA ligase (833 aa).

The 'HIGH' region motif lies at 41–52 (PYPSGAGLHVGH). The short motif at 610 to 614 (KMSKS) is the 'KMSKS' region element. ATP is bound at residue lysine 613.

It belongs to the class-I aminoacyl-tRNA synthetase family.

The protein resides in the cytoplasm. It catalyses the reaction tRNA(Leu) + L-leucine + ATP = L-leucyl-tRNA(Leu) + AMP + diphosphate. The polypeptide is Leucine--tRNA ligase (Streptococcus suis (strain 98HAH33)).